The chain runs to 642 residues: Probable glutamate--tRNA ligase, cytoplasmic (642 aa).

152–154 is an L-glutamate binding site; the sequence is RFP. Residues 157–166 carry the 'HIGH' region motif; the sequence is PNGRLHIGHA. His162 serves as a coordination point for ATP. L-glutamate is bound by residues Asp188, 326 to 330, and Arg344; that span reads YDFAC. ATP contacts are provided by residues Glu347 and 382 to 386; that span reads VLSKR. The 'KMSKS' region signature appears at 382–386; sequence VLSKR.

It belongs to the class-I aminoacyl-tRNA synthetase family. Glutamate--tRNA ligase type 2 subfamily.

The protein resides in the cytoplasm. The enzyme catalyses tRNA(Glu) + L-glutamate + ATP = L-glutamyl-tRNA(Glu) + AMP + diphosphate. This Encephalitozoon cuniculi (strain GB-M1) (Microsporidian parasite) protein is Probable glutamate--tRNA ligase, cytoplasmic.